Here is a 504-residue protein sequence, read N- to C-terminus: Lysine--tRNA ligase (504 aa).

Positions 404 and 411 each coordinate Mg(2+).

This sequence belongs to the class-II aminoacyl-tRNA synthetase family. In terms of assembly, homodimer. The cofactor is Mg(2+).

It is found in the cytoplasm. It carries out the reaction tRNA(Lys) + L-lysine + ATP = L-lysyl-tRNA(Lys) + AMP + diphosphate. This chain is Lysine--tRNA ligase, found in Aliarcobacter butzleri (strain RM4018) (Arcobacter butzleri).